The following is an 849-amino-acid chain: MSIARLVYSLFRRVRSVLLLFITISLLFYYTFQNEIDILNSYALNDSLPSINNYEHNTEGSSKLDPPDLSSTGSDRIATDKENGNVAVDLSDPATLREKNKYFPLLLKGSSHQIGSNLPISSLLTYKEKYPVLFEYSSPSLTSISQNDVHKIQPAMQLPPDVDMIKQIKDIFMKSWNQEQLLLKSNLRRESTWPIDLIDSLDTLYLCGETKLFQDSVNIIEDFDFRVPPLAMEVIDIPDITTRVLEGLLSAYELSMDKRLLNKAKHVADFILRSFDTPNRIPILKYFWKSDLRNRFPDRTVPSGQLTTMALAFIRLSQLTRLNKYFDAVERVFTTIRQSYNEFDMEFMLPDVVDASGCQLLTQEEIENGAHLKGSSIMKSINENFKFVHCQQLGKFLNPPIDDNSLQEQSQYQAYRINEKTVPILENLFKINDLFQSSYDILDGSSKNANAATMDPSIGSEVEAVDEIIEKRNFKDGTKKDSTKNTVGDKSLIDSQTFLTNSISNIFKFMTFRPMLPKQTENKKFNFLNSILTKSQFMPTTNELDVTIRKSYDVSLYSCRLGGILGLSSRVPHRGGVNTKYILPSSLLEMSEIITESCFMLMEEFDGLLPQKFELDPCTDETNGNCEFNGETKSRMIANGEYETFENDLDVGIKVSNYGKGGNDQKAKRNVLSKDGITETQNIKGDTVGSSKSIAEIDGDEVTQIRRVFTLGKDIKPHITTDDTMGSQWKNHPDWPFWVNKVESRRLLDSNIIESIFYMYRISGEQKWRSMGKQSFGILMQELMELNSGAKGLWQIKEFYENGEKVNNDLPSYWFSRTLKYYLLLFSDGDKVSLDKHILTQGGHIIKKK.

At 1-12 the chain is on the cytoplasmic side; it reads MSIARLVYSLFR. A helical; Signal-anchor for type II membrane protein transmembrane segment spans residues 13–32; the sequence is RVRSVLLLFITISLLFYYTF. The Lumenal segment spans residues 33–849; it reads QNEIDILNSY…TQGGHIIKKK (817 aa). N-linked (GlcNAc...) asparagine glycosylation occurs at Asn45. The interval 56 to 79 is disordered; that stretch reads HNTEGSSKLDPPDLSSTGSDRIAT. A disulfide bridge connects residues Cys559 and Cys598.

The protein belongs to the glycosyl hydrolase 47 family. It depends on Ca(2+) as a cofactor.

The protein localises to the endoplasmic reticulum membrane. It participates in protein modification; protein glycosylation. In terms of biological role, putative mannosidase involved in glycoprotein quality control since it is involved in the targeting of misfolded glycoproteins for ER-associated protein degradation (ERAD). This chain is Putative endoplasmic reticulum mannosidase MNL2 (MNL2), found in Saccharomyces cerevisiae (strain ATCC 204508 / S288c) (Baker's yeast).